We begin with the raw amino-acid sequence, 785 residues long: Endonuclease MutS2 (785 aa).

Residue 335–342 participates in ATP binding; that stretch reads GPNTGGKT. Positions 710–785 constitute a Smr domain; the sequence is LDLRGERYED…GNGVTIVEFK (76 aa).

The protein belongs to the DNA mismatch repair MutS family. MutS2 subfamily. In terms of assembly, homodimer. Binds to stalled ribosomes, contacting rRNA.

Functionally, endonuclease that is involved in the suppression of homologous recombination and thus may have a key role in the control of bacterial genetic diversity. In terms of biological role, acts as a ribosome collision sensor, splitting the ribosome into its 2 subunits. Detects stalled/collided 70S ribosomes which it binds and splits by an ATP-hydrolysis driven conformational change. Acts upstream of the ribosome quality control system (RQC), a ribosome-associated complex that mediates the extraction of incompletely synthesized nascent chains from stalled ribosomes and their subsequent degradation. Probably generates substrates for RQC. The chain is Endonuclease MutS2 from Listeria monocytogenes serovar 1/2a (strain ATCC BAA-679 / EGD-e).